A 352-amino-acid chain; its full sequence is Ion-translocating oxidoreductase complex subunit D (352 aa).

5 helical membrane passes run Ile20–Gly40, Gly42–Leu62, Ala78–Ala109, Pro123–Leu143, and Ile148–Ala168. Position 187 is an FMN phosphoryl threonine (Thr187). Transmembrane regions (helical) follow at residues Ile214–Leu234, Trp242–Phe262, Leu267–Leu287, Leu301–Pro321, and Asp322–Thr342.

This sequence belongs to the NqrB/RnfD family. In terms of assembly, the complex is composed of six subunits: RsxA, RsxB, RsxC, RsxD, RsxE and RsxG. FMN is required as a cofactor.

The protein resides in the cell inner membrane. Its function is as follows. Part of a membrane-bound complex that couples electron transfer with translocation of ions across the membrane. Required to maintain the reduced state of SoxR. This chain is Ion-translocating oxidoreductase complex subunit D, found in Escherichia coli O6:H1 (strain CFT073 / ATCC 700928 / UPEC).